A 459-amino-acid chain; its full sequence is Vacuolar fusion protein CCZ1 homolog (459 aa).

The protein belongs to the CCZ1 family.

The protein is Vacuolar fusion protein CCZ1 homolog of Nematostella vectensis (Starlet sea anemone).